The primary structure comprises 221 residues: Putative N-acetylmannosamine-6-phosphate 2-epimerase (221 aa).

The protein belongs to the NanE family.

The enzyme catalyses an N-acyl-D-glucosamine 6-phosphate = an N-acyl-D-mannosamine 6-phosphate. It functions in the pathway amino-sugar metabolism; N-acetylneuraminate degradation; D-fructose 6-phosphate from N-acetylneuraminate: step 3/5. In terms of biological role, converts N-acetylmannosamine-6-phosphate (ManNAc-6-P) to N-acetylglucosamine-6-phosphate (GlcNAc-6-P). This Clostridium perfringens (strain SM101 / Type A) protein is Putative N-acetylmannosamine-6-phosphate 2-epimerase.